The following is a 155-amino-acid chain: Myosin light chain alkali (155 aa).

2 EF-hand domains span residues 7-41 (REVENVEFVFEVMGSPGEGIDAFDLGDALRALNLN) and 80-115 (GCYEDFIECLKLYDKEENGTMLLAELQHALLALGES).

Myosin is a hexamer of 2 heavy chains and 4 light chains.

This is Myosin light chain alkali (Mlc1) from Drosophila virilis (Fruit fly).